Here is a 348-residue protein sequence, read N- to C-terminus: Rhodopsin (348 aa).

The residue at position 1 (methionine 1) is an N-acetylmethionine. The Extracellular segment spans residues 1 to 36 (MNGTEGPNFYVPYSNKSGVVRSPYEEPQYYLAEPWM). N-linked (GlcNAc...) asparagine glycosylation is found at asparagine 2 and asparagine 15. A helical transmembrane segment spans residues 37-61 (FSCLAAYMFMLIVLGFPINFLTLYV). Over 62-73 (TIQHKKLRTPLN) the chain is Cytoplasmic. The helical transmembrane segment at 74 to 96 (YILLNLAVADLFMVICGFTTTLV) threads the bilayer. The Extracellular segment spans residues 97–110 (TSLNGYFVFGTTGC). A disulfide bridge connects residues cysteine 110 and cysteine 187. The helical transmembrane segment at 111–133 (LVEGFFATTGGEVALWALVVLAI) threads the bilayer. The short motif at 134 to 136 (ERY) is the 'Ionic lock' involved in activated form stabilization element. The Cytoplasmic portion of the chain corresponds to 134–152 (ERYIVVCKPMSNFRFGENH). A helical membrane pass occupies residues 153–173 (AIMGVAFTWIMALACSVPPIF). The Extracellular segment spans residues 174–202 (GWSRYIPEGMQCSCGIDYYTLNPEFNNES). A Zn(2+)-binding site is contributed by glutamate 201. A helical transmembrane segment spans residues 203–224 (FVIYMFVVHFIIPLTVIFFCYG). Residues 225 to 252 (QLVFTVKEAAAQQQESATTQKAEKEVTR) are Cytoplasmic-facing. Residues 253 to 274 (MVIIMVIAFLICWVPYASVAFY) form a helical membrane-spanning segment. Over 275 to 286 (IFTHQGSDFGPI) the chain is Extracellular. Glutamine 279 contacts Zn(2+). A helical membrane pass occupies residues 287 to 308 (FMTLPAFFAKSSSIYNPVIYIM). Residue lysine 296 is modified to N6-(retinylidene)lysine. The Cytoplasmic segment spans residues 309 to 348 (MNKQFRNCMITTLCCGKNPLGDDEASTTASKTETSQVAPA). 2 S-palmitoyl cysteine lipidation sites follow: cysteine 322 and cysteine 323. The interval 330 to 348 (DDEASTTASKTETSQVAPA) is interaction with SAG. Phosphoserine is present on serine 334. Residues threonine 335 and threonine 336 each carry the phosphothreonine modification. A Phosphoserine modification is found at serine 338. Phosphothreonine is present on residues threonine 340 and threonine 342. A Phosphoserine modification is found at serine 343.

Belongs to the G-protein coupled receptor 1 family. Opsin subfamily. In terms of assembly, homodimer. May form a complex composed of RHO, GRK1 and RCVRN in a Ca(2+)-dependent manner; RCVRN prevents the interaction between GRK1 and RHO. Interacts with GRK1. Interacts (phosphorylated form) with SAG. Interacts with GNAT1. Interacts with GNAT3. SAG and G-proteins compete for a common binding site. Interacts with PRCD; the interaction promotes PRCD stability. Forms a complex with ASAP1 and ARF4. Forms a complex with ASAP1, RAB11A, Rabin8/RAB3IP, ARF4 and RAB11FIP3; the complex regulates Golgi-to-cilia rhodopsin/RHO transport in photoreceptors. Phosphorylated on some or all of the serine and threonine residues present in the C-terminal region. In terms of processing, contains one covalently linked retinal chromophore. Upon light absorption, the covalently bound 11-cis-retinal is converted to all-trans-retinal. After hydrolysis of the Schiff base and release of the covalently bound all-trans-retinal, active rhodopsin is regenerated by binding of a fresh molecule of 11-cis-retinal.

The protein localises to the membrane. It localises to the cell projection. Its subcellular location is the cilium. The protein resides in the photoreceptor outer segment. Photoreceptor required for image-forming vision at low light intensity. Required for photoreceptor cell viability after birth. Light-induced isomerization of 11-cis to all-trans retinal triggers a conformational change that activates signaling via G-proteins. Subsequent receptor phosphorylation mediates displacement of the bound G-protein alpha subunit by the arrestin SAG and terminates signaling. The chain is Rhodopsin (RHO) from Sminthopsis crassicaudata (Fat-tailed dunnart).